Here is a 365-residue protein sequence, read N- to C-terminus: Chorismate synthase (365 aa).

The segment covering 41-51 has biased composition (basic and acidic residues); the sequence is IQKELDRRRPG. Residues 41–62 are disordered; sequence IQKELDRRRPGQSEVSTPRSEA. R48 contributes to the NADP(+) binding site. FMN-binding positions include 125–127, G285, 300–304, and R327; these read RSS and KPTPS.

This sequence belongs to the chorismate synthase family. The cofactor is FMNH2.

The enzyme catalyses 5-O-(1-carboxyvinyl)-3-phosphoshikimate = chorismate + phosphate. It functions in the pathway metabolic intermediate biosynthesis; chorismate biosynthesis; chorismate from D-erythrose 4-phosphate and phosphoenolpyruvate: step 7/7. Catalyzes the anti-1,4-elimination of the C-3 phosphate and the C-6 proR hydrogen from 5-enolpyruvylshikimate-3-phosphate (EPSP) to yield chorismate, which is the branch point compound that serves as the starting substrate for the three terminal pathways of aromatic amino acid biosynthesis. This reaction introduces a second double bond into the aromatic ring system. The chain is Chorismate synthase from Methanosarcina acetivorans (strain ATCC 35395 / DSM 2834 / JCM 12185 / C2A).